Reading from the N-terminus, the 429-residue chain is UPF0597 protein BT_2080 (429 aa).

The protein belongs to the UPF0597 family.

The sequence is that of UPF0597 protein BT_2080 from Bacteroides thetaiotaomicron (strain ATCC 29148 / DSM 2079 / JCM 5827 / CCUG 10774 / NCTC 10582 / VPI-5482 / E50).